The sequence spans 304 residues: Homoserine kinase (304 aa).

Residue Pro-92 to Thr-102 coordinates ATP.

Belongs to the GHMP kinase family. Homoserine kinase subfamily.

It is found in the cytoplasm. The enzyme catalyses L-homoserine + ATP = O-phospho-L-homoserine + ADP + H(+). It participates in amino-acid biosynthesis; L-threonine biosynthesis; L-threonine from L-aspartate: step 4/5. In terms of biological role, catalyzes the ATP-dependent phosphorylation of L-homoserine to L-homoserine phosphate. The protein is Homoserine kinase of Nostoc punctiforme (strain ATCC 29133 / PCC 73102).